A 291-amino-acid chain; its full sequence is Small ribosomal subunit biogenesis GTPase RsgA 2 (291 aa).

Residues 63 to 221 form the CP-type G domain; sequence ENALVRPPVA…VADTPGFSSI (159 aa). GTP-binding positions include 112-115 and 164-172; these read SKMD and GQSGVGKST. The Zn(2+) site is built by Cys245, Cys250, His252, and Cys258.

The protein belongs to the TRAFAC class YlqF/YawG GTPase family. RsgA subfamily. Monomer. Associates with 30S ribosomal subunit, binds 16S rRNA. Zn(2+) is required as a cofactor.

The protein resides in the cytoplasm. In terms of biological role, one of several proteins that assist in the late maturation steps of the functional core of the 30S ribosomal subunit. Helps release RbfA from mature subunits. May play a role in the assembly of ribosomal proteins into the subunit. Circularly permuted GTPase that catalyzes slow GTP hydrolysis, GTPase activity is stimulated by the 30S ribosomal subunit. The sequence is that of Small ribosomal subunit biogenesis GTPase RsgA 2 from Listeria monocytogenes serovar 1/2a (strain ATCC BAA-679 / EGD-e).